Here is a 426-residue protein sequence, read N- to C-terminus: Transcriptional enhancer factor TEF-1 (426 aa).

M1 is subject to N-acetylmethionine. Residues 1–12 are compositionally biased toward polar residues; it reads MEPSSWSGSESP. The disordered stretch occupies residues 1–31; the sequence is MEPSSWSGSESPAENMERMSDSADKPIDNDA. S11 carries the post-translational modification Phosphoserine. The segment covering 15-28 has biased composition (basic and acidic residues); that stretch reads NMERMSDSADKPID. A DNA-binding region (TEA) is located at residues 28–104; the sequence is DNDAEGVWSP…QVLARRKSRD (77 aa). Residue K108 is modified to N6-lactoyllysine. Residues 167–426 form a transcriptional activation region; the sequence is GSSQDVKPFV…QHHIYRLVKD (260 aa).

Interacts with YAP1 and WWTR1/TAZ. Lactylation by AARS1 promotes nuclear localization and stabilization of YAP1, leading to increased Hippo signaling pathway. Delactylated by SIRT1. In terms of tissue distribution, preferentially expressed in skeletal muscle. Lower levels in pancreas, placenta, and heart.

It localises to the nucleus. Functionally, transcription factor which plays a key role in the Hippo signaling pathway, a pathway involved in organ size control and tumor suppression by restricting proliferation and promoting apoptosis. The core of this pathway is composed of a kinase cascade wherein MST1/MST2, in complex with its regulatory protein SAV1, phosphorylates and activates LATS1/2 in complex with its regulatory protein MOB1, which in turn phosphorylates and inactivates YAP1 oncoprotein and WWTR1/TAZ. Acts by mediating gene expression of YAP1 and WWTR1/TAZ, thereby regulating cell proliferation, migration and epithelial mesenchymal transition (EMT) induction. Binds specifically and cooperatively to the SPH and GT-IIC 'enhansons' (5'-GTGGAATGT-3') and activates transcription in vivo in a cell-specific manner. The activation function appears to be mediated by a limiting cell-specific transcriptional intermediary factor (TIF). Involved in cardiac development. Binds to the M-CAT motif. The sequence is that of Transcriptional enhancer factor TEF-1 (TEAD1) from Homo sapiens (Human).